A 150-amino-acid chain; its full sequence is Large ribosomal subunit protein bL9 (150 aa).

The protein belongs to the bacterial ribosomal protein bL9 family.

In terms of biological role, binds to the 23S rRNA. The polypeptide is Large ribosomal subunit protein bL9 (Corynebacterium glutamicum (strain ATCC 13032 / DSM 20300 / JCM 1318 / BCRC 11384 / CCUG 27702 / LMG 3730 / NBRC 12168 / NCIMB 10025 / NRRL B-2784 / 534)).